Reading from the N-terminus, the 182-residue chain is ADP-ribosylation factor-like protein 3 (182 aa).

Gly-2 carries the N-myristoyl glycine lipid modification. Residues 24–31 (GLDNGGKT), 67–71 (DIGGQ), and 126–129 (NKQD) contribute to the GTP site.

This sequence belongs to the small GTPase superfamily. Arf family.

The protein localises to the golgi apparatus membrane. It localises to the cytoplasm. The protein resides in the cytoskeleton. Its subcellular location is the spindle. It is found in the nucleus. The protein localises to the microtubule organizing center. It localises to the centrosome. The protein resides in the cell projection. Its subcellular location is the cilium. In terms of biological role, small GTP-binding protein which cycles between an inactive GDP-bound and an active GTP-bound form, and the rate of cycling is regulated by guanine nucleotide exchange factors (GEF) and GTPase-activating proteins (GAP). Required for normal cytokinesis and cilia signaling. Required for targeting proteins to the ciliary membrane by releasing myristoylated protein from unc119 cargo adapters into the cilium. The sequence is that of ADP-ribosylation factor-like protein 3 (arl3) from Danio rerio (Zebrafish).